The chain runs to 152 residues: Deoxyuridine 5'-triphosphate nucleotidohydrolase (152 aa).

Residues 71–73, N84, and 88–90 each bind substrate; these read RSG and TID.

This sequence belongs to the dUTPase family. It depends on Mg(2+) as a cofactor.

It carries out the reaction dUTP + H2O = dUMP + diphosphate + H(+). Its pathway is pyrimidine metabolism; dUMP biosynthesis; dUMP from dCTP (dUTP route): step 2/2. This enzyme is involved in nucleotide metabolism: it produces dUMP, the immediate precursor of thymidine nucleotides and it decreases the intracellular concentration of dUTP so that uracil cannot be incorporated into DNA. This is Deoxyuridine 5'-triphosphate nucleotidohydrolase from Roseobacter denitrificans (strain ATCC 33942 / OCh 114) (Erythrobacter sp. (strain OCh 114)).